The following is a 316-amino-acid chain: Probable porphobilinogen deaminase (316 aa).

An S-(dipyrrolylmethanemethyl)cysteine modification is found at C234.

It belongs to the HMBS family. Dipyrromethane is required as a cofactor.

It carries out the reaction 4 porphobilinogen + H2O = hydroxymethylbilane + 4 NH4(+). The protein operates within porphyrin-containing compound metabolism; protoporphyrin-IX biosynthesis; coproporphyrinogen-III from 5-aminolevulinate: step 2/4. Its function is as follows. Tetrapolymerization of the monopyrrole PBG into the hydroxymethylbilane pre-uroporphyrinogen in several discrete steps. The chain is Probable porphobilinogen deaminase from Methanosarcina mazei (strain ATCC BAA-159 / DSM 3647 / Goe1 / Go1 / JCM 11833 / OCM 88) (Methanosarcina frisia).